Consider the following 714-residue polypeptide: Probable serine/threonine-protein kinase At1g09600 (714 aa).

The tract at residues 1 to 64 is disordered; that stretch reads MGCNCTKGTR…NVGFEERSND (64 aa). Residue glycine 2 is the site of N-myristoyl glycine attachment. Low complexity predominate over residues 16–27; it reads VDNSNSIVSNVN. A compositionally biased stretch (basic residues) spans 31–46; sequence RRSKPKKTPKKKKKSK. One can recognise a Protein kinase domain in the interval 163 to 447; it reads FEKLEKIGQG…TASALESEFF (285 aa). Residues 169-177 and lysine 192 each bind ATP; that span reads IGQGTYSSV. Aspartate 287 serves as the catalytic Proton acceptor. The segment covering 471–498 has biased composition (basic and acidic residues); the sequence is KAQEEEAKRKKDTSSKQNDSKQVSRESK. 2 disordered regions span residues 471–579 and 693–714; these read KAQE…RKEL and VDKK…ANGR. Polar residues-rich tracts occupy residues 506–528 and 556–573; these read NAES…NSDK and GVSS…GSSR.

It belongs to the protein kinase superfamily. Ser/Thr protein kinase family.

This Arabidopsis thaliana (Mouse-ear cress) protein is Probable serine/threonine-protein kinase At1g09600.